The chain runs to 365 residues: H-2 class I histocompatibility antigen, D-D alpha chain (365 aa).

The signal sequence occupies residues 1–24 (MGAMAPRTLLLLLAAALGPTQTRA). Residues 25–114 (GSHSLRYFVT…ALRYYNQSAG (90 aa)) form an alpha-1 region. Over 25 to 311 (GSHSLRYFVT…EPPSSTKTNT (287 aa)) the chain is Extracellular. The N-linked (GlcNAc...) asparagine glycan is linked to Asn-110. Positions 115-206 (GSHTLQWMAG…KNGNATLLRT (92 aa)) are alpha-2. An intrachain disulfide couples Cys-125 to Cys-188. Asn-200 carries N-linked (GlcNAc...) asparagine glycosylation. Residues 207-298 (DPPKAHVTHH…GLPEPLTLRW (92 aa)) are alpha-3. Residues 209-297 (PKAHVTHHRR…EGLPEPLTLR (89 aa)) enclose the Ig-like C1-type domain. A disulfide bond links Cys-227 and Cys-283. Positions 299-311 (GKEEPPSSTKTNT) are connecting peptide. The chain crosses the membrane as a helical span at residues 312 to 334 (VIIAVPVVLGAVVILGAVMAFVM). Residues 335 to 365 (KRRRNTGGKGGDYALAPGSQSSDMSLPDCKV) are Cytoplasmic-facing. Positions 343–365 (KGGDYALAPGSQSSDMSLPDCKV) are disordered. Residues Ser-356 and Ser-359 each carry the phosphoserine modification.

The protein belongs to the MHC class I family. As to quaternary structure, heterodimer of an alpha chain and a beta chain (beta-2-microglobulin).

It is found in the membrane. Functionally, involved in the presentation of foreign antigens to the immune system. This Mus musculus (Mouse) protein is H-2 class I histocompatibility antigen, D-D alpha chain (H2-D1).